Reading from the N-terminus, the 244-residue chain is uncharacterized protein (244 aa).

Residues 1 to 18 (MQFSVLCKFLLLVTAVMA) form the signal peptide. The Lumenal segment spans residues 19–223 (QTEYTPGFTT…TTIPSSAVHY (205 aa)). 2 stretches are compositionally biased toward low complexity: residues 55–65 (ETSTHSVTSTN) and 75–128 (TSHN…TTHV). Residues 55-128 (ETSTHSVTST…TTVVPPTTHV (74 aa)) are disordered. The helical transmembrane segment at 224–244 (ASPSGLLALVVMLISAFAFLA) threads the bilayer.

It is found in the endoplasmic reticulum membrane. This is an uncharacterized protein from Schizosaccharomyces pombe (strain 972 / ATCC 24843) (Fission yeast).